Here is a 258-residue protein sequence, read N- to C-terminus: Thiazole synthase (258 aa).

Lys97 functions as the Schiff-base intermediate with DXP in the catalytic mechanism. Residues Gly158, 184–185 (AG), and 206–207 (NT) each bind 1-deoxy-D-xylulose 5-phosphate.

Belongs to the ThiG family. As to quaternary structure, homotetramer. Forms heterodimers with either ThiH or ThiS.

The protein resides in the cytoplasm. The enzyme catalyses [ThiS sulfur-carrier protein]-C-terminal-Gly-aminoethanethioate + 2-iminoacetate + 1-deoxy-D-xylulose 5-phosphate = [ThiS sulfur-carrier protein]-C-terminal Gly-Gly + 2-[(2R,5Z)-2-carboxy-4-methylthiazol-5(2H)-ylidene]ethyl phosphate + 2 H2O + H(+). It participates in cofactor biosynthesis; thiamine diphosphate biosynthesis. Functionally, catalyzes the rearrangement of 1-deoxy-D-xylulose 5-phosphate (DXP) to produce the thiazole phosphate moiety of thiamine. Sulfur is provided by the thiocarboxylate moiety of the carrier protein ThiS. In vitro, sulfur can be provided by H(2)S. In Bacteroides fragilis (strain ATCC 25285 / DSM 2151 / CCUG 4856 / JCM 11019 / LMG 10263 / NCTC 9343 / Onslow / VPI 2553 / EN-2), this protein is Thiazole synthase.